The following is a 1466-amino-acid chain: DNA-directed RNA polymerase subunit beta'' (1466 aa).

Zn(2+) contacts are provided by Cys220, Cys296, Cys303, and Cys306. The disordered stretch occupies residues 618 to 725; the sequence is TREEDLEDEY…EDEYDSSEED (108 aa). Composition is skewed to acidic residues over residues 621-631, 639-651, and 707-725; these read EDLEDEYETLE, DEYEYETLEDEYG, and LEEDLEEDSEDEYDSSEED.

The protein belongs to the RNA polymerase beta' chain family. RpoC2 subfamily. In plastids the minimal PEP RNA polymerase catalytic core is composed of four subunits: alpha, beta, beta', and beta''. When a (nuclear-encoded) sigma factor is associated with the core the holoenzyme is formed, which can initiate transcription. It depends on Zn(2+) as a cofactor.

The protein resides in the plastid. The protein localises to the chloroplast. The catalysed reaction is RNA(n) + a ribonucleoside 5'-triphosphate = RNA(n+1) + diphosphate. DNA-dependent RNA polymerase catalyzes the transcription of DNA into RNA using the four ribonucleoside triphosphates as substrates. The chain is DNA-directed RNA polymerase subunit beta'' from Agrostis stolonifera (Creeping bentgrass).